A 568-amino-acid chain; its full sequence is Acyl-CoA ligase gloD (568 aa).

Residues 211–219, 352–357, Asp436, Arg455, and Lys553 each bind ATP; these read TSGTSGFLK and PGYGLT. The interval 282–352 is SBD1; it reads DMQIALKSVQ…QLCPEWEINP (71 aa). Residues 353–415 are SBD2; that stretch reads GYGLTESFVC…VRSPSVMKEY (63 aa).

Belongs to the ATP-dependent AMP-binding enzyme family.

It participates in mycotoxin biosynthesis. Functionally, acyl-CoA ligase; part of the gene cluster that mediates the biosynthesis of pneumocandins, lipohexapeptides of the echinocandin family that prevent fungal cell wall formation by non-competitive inhibition of beta-1,3-glucan synthase. The 10,12-dimethylmyristoyl side chain is synthesized by the reducing polyketide synthase gloL/GLPKS4. The thioesterase gloN/GLHYD exclusively interacts with gloL/GLPKS4 to maintain turnover of the polyketide side chain. The 10R,12S-dimethylmyristic acid is then transferred to the first thiolation domain of the nonribosomal peptide synthetase gloA/GLNRPS4 by the acyl-AMP ligase gloD/GLligase, followed by its acylation to L-ornithine to trigger elongation of the cyclic hexapeptide. L-ornithine, 4R-hydroxyl-L-proline (generated from L-proline by the dioxygenase gloF/GLOXY2), 3S-hydroxyl-L-homotyrosine (generated by gloG/GLHtyB, gloH/GLHtyA, gloI/GLHtyC, gloJ/GLHtyD and hydroxylated at C-3 by the dioxygenase gloM/GLOXY1), 3R-hydroxyl-L-glutamine (generated from L-glutamine probably by the dioxygenase gloE/GLOXY3) and 3S-hydroxyl-L-proline (generated from L-proline by the dioxygenase gloF/GLOXY2 to yield pneumocandin B0), or 3S-hydroxyl-4S-methyl-L-proline (generated from L-leucine by the dioxygenase gloC/GLOXY4 to yield pneumocandin A0) are sequentially added to the growing chain. The last C domain of gloA/GLNRPS4 is proposed to be responsible for cyclization by condensation to form the peptide bond between L-ornithine and 3S-hydroxyl-4S-methyl-L-proline (for pneumocandin A0) or 3S-hydroxyl-L-proline (for pneumocandin B0). Finally, the subsequent C-4 hydroxylation of 3S-hydroxyl-L-homotyrosine and L-ornithine dihydroxylation at C-4 and C-5 are performed by the cytochrome P450 monooxygenases gloP/GLP450-1 and gloO/GLP450-2, respectively. This Glarea lozoyensis (strain ATCC 20868 / MF5171) protein is Acyl-CoA ligase gloD.